Consider the following 417-residue polypeptide: MSNLFITNVKTILTAPGGIDLVVVKIETNEPGLYGLGCATFTQRIYAVQSAIDEYLAPFLIGKDPARIEDIWQSAAVSGYWRNGPVMNNALSGIDMALWDIKGKQAGLPVYELLGGKCRDGIALYVHTDGADEVEVEDSARAKMEEGYQYIRCQMGMYGGAGTDDLRLIANRMVKAKNIQPKRSPRTKAPGIYFDPEAYAKSIPRLFDHLRNKLGFSVELLHDAHERITPINAIHMAKALEPYQLFFLEDPVAPENTEWLKMLRQQSSTPIAMGELFVNVNEWKPLIDNKLIDYIRCHISSIGGITPAKKIAIYSELNGVRTAWHSPGDISPIGVCANMHLDLSSPNFGIQEYTPMNDALREVFPGCPEVDQGYAYVNDKPGLGIDINEALAAKFPCEGGNPTWTMARTPDGTVWRP.

Residues Gln43 and His127 each contribute to the substrate site. Tyr158 serves as the catalytic Proton donor/acceptor. Asp223 provides a ligand contact to Mg(2+). His225 functions as the Proton donor/acceptor in the catalytic mechanism. Mg(2+)-binding residues include Glu249 and Glu275. Substrate contacts are provided by Glu275, Arg296, His325, Asp329, and Glu352.

The protein belongs to the mandelate racemase/muconate lactonizing enzyme family. GalD subfamily. Mg(2+) is required as a cofactor.

It carries out the reaction D-gluconate = 2-dehydro-3-deoxy-D-gluconate + H2O. Has low D-gluconate dehydratase activity (in vitro), suggesting that it has no significant role in D-gluconate degradation in vivo. Has no detectable activity with a panel of 70 other acid sugars (in vitro). In Pantoea ananatis (strain LMG 20103), this protein is D-galactonate dehydratase family member RspA (rspA).